The chain runs to 305 residues: Achromobactin-binding periplasmic protein (305 aa).

An N-terminal signal peptide occupies residues 1-29; that stretch reads MNEYLVSRRRLLRLSLSLLPLGLGRPALA. The Fe/B12 periplasmic-binding domain occupies 37–302; sequence RVITLFQGAT…DIARVTGIAG (266 aa).

Belongs to the bacterial solute-binding protein 8 family.

It is found in the periplasm. In terms of biological role, binds citrate- or chloride-dependent Fe(3+); part of the binding-protein-dependent transport system CbrABCD for uptake of the siderophore achromobactin. This is Achromobactin-binding periplasmic protein (cbrA) from Dickeya dadantii (strain 3937) (Erwinia chrysanthemi (strain 3937)).